A 98-amino-acid chain; its full sequence is NADH-ubiquinone oxidoreductase chain 4L (98 aa).

Helical transmembrane passes span 1 to 21 (MSLVYMNIMTAFAVSLTGLLM), 29 to 49 (SLLCLEGMMLSLFIMATLMIL), and 61 to 81 (IILLVFAACEAALGLSLLVMV).

It belongs to the complex I subunit 4L family. Core subunit of respiratory chain NADH dehydrogenase (Complex I) which is composed of 45 different subunits.

The protein localises to the mitochondrion inner membrane. The catalysed reaction is a ubiquinone + NADH + 5 H(+)(in) = a ubiquinol + NAD(+) + 4 H(+)(out). Core subunit of the mitochondrial membrane respiratory chain NADH dehydrogenase (Complex I) which catalyzes electron transfer from NADH through the respiratory chain, using ubiquinone as an electron acceptor. Part of the enzyme membrane arm which is embedded in the lipid bilayer and involved in proton translocation. The chain is NADH-ubiquinone oxidoreductase chain 4L (MT-ND4L) from Capra hircus (Goat).